Reading from the N-terminus, the 498-residue chain is DNA primase (498 aa).

A CHC2-type zinc finger spans residues 35 to 59; it reads CPFHPDDTPSFYVSPSKQIFKCFGC. Residues 243–324 form the Toprim domain; it reads GFAILVEGYF…EVYPVYLPEG (82 aa). Mg(2+)-binding residues include Glu249, Asp293, and Asp295.

It belongs to the DnaG primase family. Monomer. Interacts with DnaB. Zn(2+) serves as cofactor. Mg(2+) is required as a cofactor.

The enzyme catalyses ssDNA + n NTP = ssDNA/pppN(pN)n-1 hybrid + (n-1) diphosphate.. Its function is as follows. RNA polymerase that catalyzes the synthesis of short RNA molecules used as primers for DNA polymerase during DNA replication. This is DNA primase from Aquifex aeolicus (strain VF5).